The primary structure comprises 354 residues: MTELKNDRYLRALLRQPVDVTPVWMMRQAGRYLPEYKATRAQAGDFMSLCKNAELACEVTLQPLRRFPLDAAILFSDILTIPDAMGLGLYFETGEGPRFTSPIKSKADIDKLPIPDPEGELGYVMNAVRTIRRELKGEVPLIGFSGSPWTLATYMVEGGSSKAFTVIKKMMYAEPMALHALLDKLAKSVTLYLNAQIKAGAQSVMIFDTWGGVLTGRDYQQFSLYYMHKIIDGLLRENEGRRVPVTLFTKGGGQWLEAMAATGCDALGLDWTTDIADARRRVGDTVALQGNMDPSMLYAQPARIEEEVASILAGFGQGEGHVFNLGHGIHQDVPPEHAGAFVEAVHRHSAQYHL.

Residues arginine 27–arginine 31, aspartate 77, tyrosine 154, threonine 209, and histidine 327 contribute to the substrate site.

This sequence belongs to the uroporphyrinogen decarboxylase family. As to quaternary structure, homodimer.

It localises to the cytoplasm. The enzyme catalyses uroporphyrinogen III + 4 H(+) = coproporphyrinogen III + 4 CO2. Its pathway is porphyrin-containing compound metabolism; protoporphyrin-IX biosynthesis; coproporphyrinogen-III from 5-aminolevulinate: step 4/4. Catalyzes the decarboxylation of four acetate groups of uroporphyrinogen-III to yield coproporphyrinogen-III. The chain is Uroporphyrinogen decarboxylase from Enterobacter sp. (strain 638).